Reading from the N-terminus, the 287-residue chain is Nucleotide-binding protein Dtpsy_0831 (287 aa).

10 to 17 (GMSGSGKS) lines the ATP pocket. Residue 59–62 (DVRS) participates in GTP binding.

It belongs to the RapZ-like family.

Displays ATPase and GTPase activities. In Acidovorax ebreus (strain TPSY) (Diaphorobacter sp. (strain TPSY)), this protein is Nucleotide-binding protein Dtpsy_0831.